Here is a 140-residue protein sequence, read N- to C-terminus: MSSEYRTGREGEFTYRGHTLDELQAMSLEDITALLPARQRRTIERGLTTEQQKLRETVRDADPQKTANDPIRTHLRDMPILPSFVEKTIAVYNGQSFERVRIEPEMIGHYLGEFQLTRTSVEHGQAGIGATRSSKFVPLK.

The tract at residues 43 to 71 is disordered; the sequence is IERGLTTEQQKLRETVRDADPQKTANDPI. A compositionally biased stretch (basic and acidic residues) spans 52-63; that stretch reads QKLRETVRDADP.

Belongs to the universal ribosomal protein uS19 family.

Its function is as follows. Protein S19 forms a complex with S13 that binds strongly to the 16S ribosomal RNA. The sequence is that of Small ribosomal subunit protein uS19 from Haloquadratum walsbyi (strain DSM 16790 / HBSQ001).